We begin with the raw amino-acid sequence, 519 residues long: Acetylcholine receptor subunit gamma (519 aa).

The first 22 residues, 1-22 (MQGGQRPHLLLLLLAVCLGAQS), serve as a signal peptide directing secretion. At 23 to 240 (RNQEERLLAD…VVFYLLIQRK (218 aa)) the chain is on the extracellular side. N-linked (GlcNAc...) asparagine glycans are attached at residues Asn52 and Asn163. Cys150 and Cys164 are oxidised to a cystine. The next 3 membrane-spanning stretches (helical) occupy residues 241–265 (PLFYVINIIAPCVLISSVAILIYFL), 274–292 (CTVATNVLLAQTVFLFLVA), and 308–329 (YLTFLMVVTILIVVNSVVVLNV). The Cytoplasmic portion of the chain corresponds to 330–476 (SLRSPHTHSM…WLLVGRVLDR (147 aa)). Residues 477-497 (VCFLAMLSLFICGTAGIFLMA) traverse the membrane as a helical segment.

This sequence belongs to the ligand-gated ion channel (TC 1.A.9) family. Acetylcholine receptor (TC 1.A.9.1) subfamily. Gamma/CHRNG sub-subfamily. As to quaternary structure, pentamer of two alpha chains, and one each of the beta, delta, and gamma (in immature muscle) or epsilon (in mature muscle) chains. At least in myotubes of skeletal muscle.

It localises to the postsynaptic cell membrane. It is found in the cell membrane. The enzyme catalyses K(+)(in) = K(+)(out). The catalysed reaction is Na(+)(in) = Na(+)(out). Functionally, after binding acetylcholine, the AChR responds by an extensive change in conformation that affects all subunits and leads to opening of an ion-conducting channel across the plasma membrane. In Mus musculus (Mouse), this protein is Acetylcholine receptor subunit gamma (Chrng).